The primary structure comprises 366 residues: Aminomethyltransferase (366 aa).

The protein belongs to the GcvT family. The glycine cleavage system is composed of four proteins: P, T, L and H.

The catalysed reaction is N(6)-[(R)-S(8)-aminomethyldihydrolipoyl]-L-lysyl-[protein] + (6S)-5,6,7,8-tetrahydrofolate = N(6)-[(R)-dihydrolipoyl]-L-lysyl-[protein] + (6R)-5,10-methylene-5,6,7,8-tetrahydrofolate + NH4(+). The glycine cleavage system catalyzes the degradation of glycine. This Sodalis glossinidius (strain morsitans) protein is Aminomethyltransferase.